The following is a 251-amino-acid chain: Uroporphyrinogen-III synthase (251 aa).

A disordered region spans residues 231-251 (PAPNPESLASSIVAFDEENSS).

It belongs to the uroporphyrinogen-III synthase family.

It carries out the reaction hydroxymethylbilane = uroporphyrinogen III + H2O. Its pathway is porphyrin-containing compound metabolism; protoporphyrin-IX biosynthesis; coproporphyrinogen-III from 5-aminolevulinate: step 3/4. Functionally, catalyzes cyclization of the linear tetrapyrrole, hydroxymethylbilane, to the macrocyclic uroporphyrinogen III. This chain is Uroporphyrinogen-III synthase (ups1), found in Schizosaccharomyces pombe (strain 972 / ATCC 24843) (Fission yeast).